A 227-amino-acid polypeptide reads, in one-letter code: uncharacterized protein (227 aa).

The next 2 membrane-spanning stretches (helical) occupy residues 13 to 35 and 155 to 177; these read CVRA…FAFS and IFFR…MVFL. The disordered stretch occupies residues 192–227; sequence GDARPRPAGPQGTARSRTDEAQVSPGTPPECPVSVF. Over residues 217–227 the composition is skewed to pro residues; sequence GTPPECPVSVF.

Its subcellular location is the cell membrane. This is an uncharacterized protein from Treponema pallidum (strain Nichols).